The primary structure comprises 200 residues: Superoxide dismutase [Fe] (200 aa).

Fe cation is bound by residues His-28, His-82, Asp-165, and His-169.

It belongs to the iron/manganese superoxide dismutase family. Homodimer. Fe cation serves as cofactor.

The catalysed reaction is 2 superoxide + 2 H(+) = H2O2 + O2. Functionally, destroys superoxide anion radicals which are normally produced within the cells and which are toxic to biological systems. In Rhodobacter capsulatus (Rhodopseudomonas capsulata), this protein is Superoxide dismutase [Fe] (sodB).